A 500-amino-acid chain; its full sequence is MANIINLWNGIVPTVQDVNVASITAFKSMIDETWDKKIEANTCISRKHRNIIHEVIRDFMKAYPKMDENKKSPLGAPMQWLTQYYILKNEYHKTMLAYDNGSLNTKFKTLNIYMITNVGQYILYIVFCIISGKNHDGTPYIYDSEITSNDKNFINERIKYACKQILHGQLTIALRIRNKFMFIGSPMYLWFNVNGSQVYHDIYDRNAGFHNKEIGRLLYAFMYYLSISGRFLNDFALLKFTYLGESWTFSLSVPEYILYGLGYSVFDTIEKFSNDAILVYIRTNNRNGYDYVEFNKKGIAKVTEDKPDNDKRIHAIRLINDSTDVQHIHFGFRNMVIIDNECANIQSSAENATDTGHHQDSKINIEVEDDVIDDDDYNPKPTPIPEPHPRPPFPRHEYHKRPKLLPVEEPDPVKKDADRIRLDNHILNTLDHNLNFIGHYCCDTAAVDRLEHHIETLGQYAVILARKINMQTLLFPWPLPTVHPHAIDGSIPPHGRSTIL.

Residues Cys-43 and Cys-342 are joined by a disulfide bond.

Belongs to the orthopoxvirus OPG153 protein family. In terms of assembly, interacts with proteins OPG094 and OPG143. Interacts with OPG154. Interacts with OPG152. Interacts with host laminin.

Its subcellular location is the virion membrane. Its function is as follows. Envelop protein that mediates acid-dependent endocytosis into host cells. Plays an important role in endocytic entry of the virus by acting as an acid-sensitive membrane fusion suppressor. Low pH in host endosomes triggers conformational changes to allow de-repression of viral fusion complex activity and membrane fusion within vesicles. Also plays a role in bridging the mature virion with structural protein OPG152. The chain is Envelop protein OPG153 (OPG153) from Vaccinia virus (strain Western Reserve) (VACV).